Reading from the N-terminus, the 545-residue chain is MLTQLKTYPKLLKHYEEIKEVHMRDWFSKDKERASRYFLQFESLSLDYSKNRLNDTTLKLLFELANDCSLKEKIEAMFKGEKINTTEKRAVLHTALRSLNDTEILLDNMEVLKSIRSVLKRMRAFSDSVRSGKRLGYTNQVITDIVNIGIGGSDLGALMVCTALKRYAHPRLKMHFVSNVDGTQILDVLEKLNPASTLFIVASKTFSTQETLTNALTARKWFVERSGDEKHIAKHFVAVSTNKEAVQQFGIDEHNMFEFWDFVGGRYSLWSAIGLSIMIYLGKKNFNALLKGAYLMDEHFRNAPFESNLPVLMGLIGVWYINFFQSKSHLIAPYDQYLRHFPKFIQQLDMESNGKRISKKGEIIPYDTCPVVWGDMGINAQHAFFQLLHQGTHLIPIDFIASLDKKPNAKGHHEILFSNVLAQAQAFMKGKSYEEALGELLFKGLDKDEAKDLAHHRVFFGNRPSNILLLEKISPSNIGALVALYEHKVFVQGVIWDINSFDQWGVELGKELAVPILQELEGHKSNAYFDSSTKRLIELYKNYNQ.

Glu-351 (proton donor) is an active-site residue. Catalysis depends on residues His-382 and Lys-510.

The protein belongs to the GPI family.

The protein localises to the cytoplasm. It carries out the reaction alpha-D-glucose 6-phosphate = beta-D-fructose 6-phosphate. It participates in carbohydrate biosynthesis; gluconeogenesis. It functions in the pathway carbohydrate degradation; glycolysis; D-glyceraldehyde 3-phosphate and glycerone phosphate from D-glucose: step 2/4. In terms of biological role, catalyzes the reversible isomerization of glucose-6-phosphate to fructose-6-phosphate. The protein is Glucose-6-phosphate isomerase of Helicobacter pylori (strain Shi470).